Reading from the N-terminus, the 488-residue chain is Beta-1,3-glucan-binding protein (488 aa).

The first 17 residues, 1–17, serve as a signal peptide directing secretion; that stretch reads MFVTFICFLACLTCSYG. Residues 18 to 135 are binds to curdlan, laminarihexaose and laminarin. The complex formation with laminarin induces self-association of the complexes into a macro structure, likely containing six protein and three laminarin molecules. The macro structures may form a platform on a microbial surface for recruitment of downstream proteases, as a means of amplification of the initial signal of pathogen recognition for the activation of the phenoloxidase cascade; that stretch reads QPRAQQYVVP…GTPADTSLEP (118 aa). Positions 18-198 are binds to curdlan, lipopolysaccharide and lipoteichoic acid, activates the phenoloxidase cascade and is resistant to proteolytic degradation by trypsin or chymotrypsin, but is not as effective as the full-length protein in aggregation of microorganisms; it reads QPRAQQYVVP…LKDLANWEAE (181 aa). Residues 24-123 form the CBM39 domain; the sequence is YVVPSAKLEA…GEWTVTEFVN (100 aa). The tract at residues 24-127 is binds to laminarihexaose and laminarin; that stretch reads YVVPSAKLEA…VTEFVNEDGT (104 aa). Substrate is bound by residues Asp72, 99 to 101, and Arg110; that span reads WTY. The disordered stretch occupies residues 125 to 158; sequence DGTPADTSLEPTTAPTPVRPDQPNQPIPTHRPDP. Residues 129–139 are compositionally biased toward polar residues; sequence ADTSLEPTTAP. Over residues 141-150 the composition is skewed to pro residues; the sequence is PVRPDQPNQP. One can recognise a GH16 domain in the interval 144–488; it reads PDQPNQPIPT…KVDYVRVYAL (345 aa). Residues 199–488 are binds to laminarin, but not to curdlan, does not activate the phenoloxidase cascade, is susceptible to proteinase digestion by trypsin or chymotrypsin and does not cause aggregation of microorganisms; the sequence is VKFPEEPDYP…KVDYVRVYAL (290 aa). N-linked (GlcNAc...) asparagine glycans are attached at residues Asn373 and Asn453.

The protein belongs to the insect beta-1,3-glucan binding protein family. As to quaternary structure, monomer. In terms of processing, the N-terminus is blocked. Fat body and hemolymph.

The protein resides in the secreted. Involved in the recognition of invading microorganisms causing their aggregation. Activates the phenoloxidase cascade. Binds specifically to beta-1,3-glucan. Binds to curdlan, a linear water-insoluble beta-1,3-glucan polysaccharide, and to laminarin, a water-soluble beta-1,3-glucan polysaccharide containing beta-1,6 branches. Also binds to lipopolysaccharide and lipoteichoic acid. This is Beta-1,3-glucan-binding protein from Plodia interpunctella (Indianmeal moth).